Here is a 420-residue protein sequence, read N- to C-terminus: Phospholipase A1-II 3 (420 aa).

An N-terminal signal peptide occupies residues 1–21 (MCCFLLVSVLLATTLTDVASA). A glycan (N-linked (GlcNAc...) asparagine) is linked at Asn-231. The active-site Acyl-ester intermediate is Ser-240. The active-site Charge relay system is the Ser-240. The N-linked (GlcNAc...) asparagine glycan is linked to Asn-294. Residues Asp-305 and His-343 each act as charge relay system in the active site. A coiled-coil region spans residues 367 to 388 (VVDRDLALVNKEVDALRDEYQV). N-linked (GlcNAc...) asparagine glycosylation occurs at Asn-403.

It belongs to the AB hydrolase superfamily. Lipase family.

The protein resides in the secreted. Acylhydrolase that catalyzes the hydrolysis of phospholipids at the sn-1 position. This chain is Phospholipase A1-II 3, found in Oryza sativa subsp. japonica (Rice).